The sequence spans 214 residues: MIENISKLIAEKVSSELNYDNERKEIIQYGTYALIQTLISIISVLILGLVFNIALEALIFLFTASILRKYSGGAHSESSNVCTLLGIIISICIGFLIKSSFFAKMNFELVVFIGIVIFVFGYFIVFKFAPVDTKNKPIKTEKKKKRMKKGSLKILTIYLFIEVLSIILYYNSGWSLAKPVMLSIIFGVAWQCMTLTYIGNILLKTIDSFTNKLL.

A run of 5 helical transmembrane segments spans residues 41–61 (IISV…LIFL), 83–103 (TLLG…SFFA), 109–129 (LVVF…FKFA), 154–174 (ILTI…NSGW), and 179–199 (PVML…TYIG).

This sequence belongs to the AgrB family.

The protein localises to the cell membrane. Its function is as follows. May be involved in the proteolytic processing of a quorum sensing system signal molecule precursor. The polypeptide is Putative AgrB-like protein 2 (Clostridium perfringens (strain 13 / Type A)).